A 702-amino-acid chain; its full sequence is Translation factor GUF1 homolog, chloroplastic (702 aa).

Positions 1–30 (MASAAPASRGAARASTAARDAPFAAAARGP) are enriched in low complexity. The tract at residues 1-41 (MASAAPASRGAARASTAARDAPFAAAARGPGRFRRDGNGRN) is disordered. The region spanning 87–283 (SQIRNFSIIA…NIVKMIPPPP (197 aa)) is the tr-type G domain. GTP is bound by residues 96 to 103 (AHIDHGKS), 162 to 166 (DTPGH), and 216 to 219 (NKID).

This sequence belongs to the TRAFAC class translation factor GTPase superfamily. Classic translation factor GTPase family. LepA subfamily.

Its subcellular location is the plastid. It localises to the chloroplast. The catalysed reaction is GTP + H2O = GDP + phosphate + H(+). Promotes chloroplast protein synthesis. May act as a fidelity factor of the translation reaction, by catalyzing a one-codon backward translocation of tRNAs on improperly translocated ribosomes. The polypeptide is Translation factor GUF1 homolog, chloroplastic (Micromonas pusilla (strain CCMP1545) (Picoplanktonic green alga)).